Here is a 103-residue protein sequence, read N- to C-terminus: Pyrimidine/purine nucleoside phosphorylase (103 aa).

The protein belongs to the nucleoside phosphorylase PpnP family.

It carries out the reaction a purine D-ribonucleoside + phosphate = a purine nucleobase + alpha-D-ribose 1-phosphate. The catalysed reaction is adenosine + phosphate = alpha-D-ribose 1-phosphate + adenine. It catalyses the reaction cytidine + phosphate = cytosine + alpha-D-ribose 1-phosphate. The enzyme catalyses guanosine + phosphate = alpha-D-ribose 1-phosphate + guanine. It carries out the reaction inosine + phosphate = alpha-D-ribose 1-phosphate + hypoxanthine. The catalysed reaction is thymidine + phosphate = 2-deoxy-alpha-D-ribose 1-phosphate + thymine. It catalyses the reaction uridine + phosphate = alpha-D-ribose 1-phosphate + uracil. The enzyme catalyses xanthosine + phosphate = alpha-D-ribose 1-phosphate + xanthine. Functionally, catalyzes the phosphorolysis of diverse nucleosides, yielding D-ribose 1-phosphate and the respective free bases. Can use uridine, adenosine, guanosine, cytidine, thymidine, inosine and xanthosine as substrates. Also catalyzes the reverse reactions. The chain is Pyrimidine/purine nucleoside phosphorylase from Geobacter sp. (strain M21).